The sequence spans 158 residues: MPLLLTGKKFHNDLKTNKCLAIFAPLEGGYETRLLRRMRAKGFKTFITSARGLGDPEVFLLKLHGVRPPHLGHQSVGRNGALGEVQQVIPQASELFNENDKNKLLWLLEGQVLSQSELESLIEICTKDNKLTIVVEMGGSRKLEWKSLSNYILDEFEN.

It belongs to the complex I NdhN subunit family. In terms of assembly, NDH-1 can be composed of about 15 different subunits; different subcomplexes with different compositions have been identified which probably have different functions.

It localises to the cellular thylakoid membrane. It catalyses the reaction a plastoquinone + NADH + (n+1) H(+)(in) = a plastoquinol + NAD(+) + n H(+)(out). The enzyme catalyses a plastoquinone + NADPH + (n+1) H(+)(in) = a plastoquinol + NADP(+) + n H(+)(out). Functionally, NDH-1 shuttles electrons from an unknown electron donor, via FMN and iron-sulfur (Fe-S) centers, to quinones in the respiratory and/or the photosynthetic chain. The immediate electron acceptor for the enzyme in this species is believed to be plastoquinone. Couples the redox reaction to proton translocation, and thus conserves the redox energy in a proton gradient. Cyanobacterial NDH-1 also plays a role in inorganic carbon-concentration. The polypeptide is NAD(P)H-quinone oxidoreductase subunit N (Prochlorococcus marinus (strain MIT 9301)).